A 416-amino-acid chain; its full sequence is Elongation factor 1-gamma 3 (416 aa).

One can recognise a GST N-terminal domain in the interval 1 to 82 (MALVLHCGSG…YVARLKDNSS (82 aa)). The GST C-terminal domain occupies 87 to 215 (SLIDYSHIEQ…FKQAESVPPV (129 aa)). A disordered region spans residues 213–263 (PPVQKKAAPPKESKAKEAKKEAPKEAPKPKVEASEEEEAPKPKPKNPLDLL). The span at 221-245 (PPKESKAKEAKKEAPKEAPKPKVEA) shows a compositional bias: basic and acidic residues. Residues 256 to 416 (PKNPLDLLPP…EDLLDAKCFK (161 aa)) form the EF-1-gamma C-terminal domain.

As to quaternary structure, EF-1 is composed of four subunits: alpha, beta, delta, and gamma.

In terms of biological role, probably plays a role in anchoring the complex to other cellular components. This chain is Elongation factor 1-gamma 3, found in Oryza sativa subsp. japonica (Rice).